A 313-amino-acid chain; its full sequence is Ribosomal RNA small subunit methyltransferase H (313 aa).

S-adenosyl-L-methionine is bound by residues 34–36 (GGH), D54, F81, D102, and Q109. The segment at 289 to 313 (IAGPEETDRNPRARSAKLRAAEKLG) is disordered.

The protein belongs to the methyltransferase superfamily. RsmH family.

The protein resides in the cytoplasm. The catalysed reaction is cytidine(1402) in 16S rRNA + S-adenosyl-L-methionine = N(4)-methylcytidine(1402) in 16S rRNA + S-adenosyl-L-homocysteine + H(+). Functionally, specifically methylates the N4 position of cytidine in position 1402 (C1402) of 16S rRNA. The polypeptide is Ribosomal RNA small subunit methyltransferase H (Trichlorobacter lovleyi (strain ATCC BAA-1151 / DSM 17278 / SZ) (Geobacter lovleyi)).